A 148-amino-acid polypeptide reads, in one-letter code: L-alanine exporter AlaE (148 aa).

Transmembrane regions (helical) follow at residues 18–38, 49–69, 88–108, and 115–135; these read FALVVYCFVIGMIIEIVISGM, VSIPVNILIAWPYGLYRDAFI, LLAYVSFQSPVYALILWSVGA, and TAVASNALVSMAMGVAYGYFL.

This sequence belongs to the AlaE exporter family.

Its subcellular location is the cell inner membrane. In terms of biological role, exports L-alanine. The protein is L-alanine exporter AlaE of Yersinia enterocolitica subsp. palearctica serotype O:3 (strain DSM 13030 / CIP 106945 / Y11).